Here is a 28-residue protein sequence, read N- to C-terminus: Expansin-B1 (28 aa).

The 18-residue stretch at 11-28 folds into the Expansin-like CBD domain; the sequence is MLLSLQGPXSLRMVSESG.

This sequence belongs to the expansin family. Expansin B subfamily.

Its subcellular location is the secreted. The protein localises to the cell wall. It is found in the membrane. In terms of biological role, may cause loosening and extension of plant cell walls by disrupting non-covalent bonding between cellulose microfibrils and matrix glucans. The sequence is that of Expansin-B1 from Pseudotsuga menziesii (Douglas-fir).